Reading from the N-terminus, the 221-residue chain is Oxaloacetate tautomerase FAHD1, mitochondrial (221 aa).

The transit peptide at 1-24 (MAASRPLSRFWEWGKNIVCVGRNY) directs the protein to the mitochondrion. Ser-37 is modified (phosphoserine). Residues Glu-68, Glu-70, and Asp-99 each contribute to the Mg(2+) site. An N6-acetyllysine modification is found at Lys-110. Residue Lys-112 is modified to N6-succinyllysine.

Belongs to the FAH family. As to quaternary structure, homodimer. Requires Mg(2+) as cofactor. Mn(2+) is required as a cofactor.

It localises to the mitochondrion. Its subcellular location is the cytoplasm. It is found in the cytosol. The catalysed reaction is oxaloacetate = enol-oxaloacetate. It catalyses the reaction oxaloacetate + H(+) = pyruvate + CO2. The enzyme catalyses a 3-acylpyruvate + H2O = a carboxylate + pyruvate + H(+). It carries out the reaction acetylpyruvate + H2O = acetate + pyruvate + H(+). The catalysed reaction is 3-fumarylpyruvate + H2O = fumarate + pyruvate + H(+). With respect to regulation, oxaloacetate decarboxylation is competitively inhibited by oxalate. Tautomerase that converts enol-oxaloacetate, a strong inhibitor of succinate dehydrogenase, to the physiological keto form of oxaloacetate. It is thereby required to maximize aerobic respiration efficiency by preventing succinate dehydrogenase inhibition. Also acts as a weak oxaloacetate decarboxylase (ODx), catalyzing the decarboxylation of oxaloacetate (OAA) to pyruvate and CO(2), and as such is likely a regulatory enzyme in the TCA cycle. Also displays acylpyruvase activity, being able to hydrolyze acetylpyruvate and fumarylpyruvate in vitro. The sequence is that of Oxaloacetate tautomerase FAHD1, mitochondrial from Bos taurus (Bovine).